The following is a 943-amino-acid chain: Valine--tRNA ligase (943 aa).

A 'HIGH' region motif is present at residues 45–55 (PNVTGTLHMGH). The short motif at 541–545 (KMSKS) is the 'KMSKS' region element. Lysine 544 lines the ATP pocket. Residues 875–934 (IDVAAERIRLAKEIEKLEKQISIAQGKLANEGFVARAPAAVIDQEKQRVADFTATLEQLK) adopt a coiled-coil conformation.

This sequence belongs to the class-I aminoacyl-tRNA synthetase family. ValS type 1 subfamily. In terms of assembly, monomer.

Its subcellular location is the cytoplasm. It catalyses the reaction tRNA(Val) + L-valine + ATP = L-valyl-tRNA(Val) + AMP + diphosphate. In terms of biological role, catalyzes the attachment of valine to tRNA(Val). As ValRS can inadvertently accommodate and process structurally similar amino acids such as threonine, to avoid such errors, it has a 'posttransfer' editing activity that hydrolyzes mischarged Thr-tRNA(Val) in a tRNA-dependent manner. In Dechloromonas aromatica (strain RCB), this protein is Valine--tRNA ligase.